An 851-amino-acid polypeptide reads, in one-letter code: Putative cell signaling protein (851 aa).

3 stretches are compositionally biased toward basic and acidic residues: residues 165–176 (KLNEQDGKKSDN), 196–223 (DQAR…EETK), and 767–781 (SEER…LSHD). Disordered stretches follow at residues 165 to 223 (KLNE…EETK) and 714 to 781 (DDSE…LSHD).

Palmitoylated.

This Schizosaccharomyces pombe (strain 972 / ATCC 24843) (Fission yeast) protein is Putative cell signaling protein.